Consider the following 148-residue polypeptide: Thiol-disulfide oxidoreductase YkuV (148 aa).

Positions 2-145 constitute a Thioredoxin domain; sequence KLRQPMPELT…LEKRVNRVLA (144 aa). A disulfide bridge connects residues C41 and C44.

In terms of assembly, monomer.

The protein resides in the cytoplasm. In terms of biological role, participates in various redox reactions through the reversible oxidation of its active center dithiol to a disulfide and catalyzes dithiol-disulfide exchange reactions. The protein is Thiol-disulfide oxidoreductase YkuV (ykuV) of Bacillus subtilis (strain 168).